Here is a 171-residue protein sequence, read N- to C-terminus: Protein TIFY 11d (171 aa).

The Tify domain occupies 65–100; it reads PSAGTAPLTIFYDGRMVVVDDVPAEKAAELMRLAGS. The short motif at 117–142 is the Jas element; sequence PIARKASLQRFLQKRKHRITTTSEPY. Residues 119-126 carry the Nuclear localization signal motif; that stretch reads ARKASLQR.

Belongs to the TIFY/JAZ family. Interacts with BHLH148 and COI1A. Interacts with COI1A, COI1B and COI2 in a coronatine-dependent manner. Coronatine is an analog of jasmonoyl isoleucine (JA-Ile). In terms of processing, ubiquitinated. Increase in jasmonoyl isoleucine (JA-Ile) levels mediates its degradation via COI1A-mediated proteasome pathway.

It is found in the nucleus. In terms of biological role, repressor of jasmonate (JA) responses. May act on an initial response of JA-regulated gene expression toward drought tolerance as part of a BHLH148-TIFY11D/JAZ12-COI1A complex. The chain is Protein TIFY 11d from Oryza sativa subsp. indica (Rice).